A 296-amino-acid chain; its full sequence is Thymidylate synthase (296 aa).

Residues R23 and 157–158 contribute to the dUMP site; that span reads RR. The Nucleophile role is filled by C177. Residues 198–201, N209, and 239–241 contribute to the dUMP site; these read RSAD and HIY. D201 contacts (6R)-5,10-methylene-5,6,7,8-tetrahydrofolate. A295 contacts (6R)-5,10-methylene-5,6,7,8-tetrahydrofolate.

This sequence belongs to the thymidylate synthase family. Bacterial-type ThyA subfamily. As to quaternary structure, homodimer.

It is found in the cytoplasm. The enzyme catalyses dUMP + (6R)-5,10-methylene-5,6,7,8-tetrahydrofolate = 7,8-dihydrofolate + dTMP. The protein operates within pyrimidine metabolism; dTTP biosynthesis. Its function is as follows. Catalyzes the reductive methylation of 2'-deoxyuridine-5'-monophosphate (dUMP) to 2'-deoxythymidine-5'-monophosphate (dTMP) while utilizing 5,10-methylenetetrahydrofolate (mTHF) as the methyl donor and reductant in the reaction, yielding dihydrofolate (DHF) as a by-product. This enzymatic reaction provides an intracellular de novo source of dTMP, an essential precursor for DNA biosynthesis. This chain is Thymidylate synthase, found in Zymomonas mobilis subsp. mobilis (strain ATCC 31821 / ZM4 / CP4).